A 447-amino-acid chain; its full sequence is Probable ribonuclease FAU-1 (447 aa).

A disordered region spans residues 424 to 447; that stretch reads PEAPGGKICTPEGLTSAPPRSSSA.

This sequence belongs to the FAU-1 family.

In terms of biological role, probable RNase involved in rRNA stability through maturation and/or degradation of precursor rRNAs. Binds to RNA in loop regions with AU-rich sequences. The sequence is that of Probable ribonuclease FAU-1 from Pyrobaculum neutrophilum (strain DSM 2338 / JCM 9278 / NBRC 100436 / V24Sta) (Thermoproteus neutrophilus).